The chain runs to 286 residues: Putative WUSCHEL-related homeobox 2 (286 aa).

Positions 1–25 are disordered; it reads MAPAVQQQQSGGGGGSTGAAAVGST. A DNA-binding region (homeobox; WUS-type) is located at residues 23–87; sequence GSTTRWCPTP…NHKARDRQKL (65 aa).

This sequence belongs to the WUS homeobox family.

It localises to the nucleus. Transcription factor which may be involved in developmental processes. The chain is Putative WUSCHEL-related homeobox 2 (WOX2) from Oryza sativa subsp. japonica (Rice).